A 261-amino-acid chain; its full sequence is RING-H2 finger protein ATL58 (261 aa).

A helical transmembrane segment spans residues 25–45 (AFIFSVPICFTFIILFLFYLI). The RING-type; atypical zinc-finger motif lies at 100 to 142 (CSVCLGDYQPNDKLQQIPVCKHTFHMDCIDLWLTSHTTCPLCR). 2 disordered regions span residues 149-227 (RSRQ…NDGH) and 241-261 (MEEDERNNIGTSSACCSCRTG). Residues 194-221 (SGVSSQPESQPVVNHRGVSSQPESQPVN) are compositionally biased toward polar residues.

Belongs to the RING-type zinc finger family. ATL subfamily.

Its subcellular location is the membrane. The catalysed reaction is S-ubiquitinyl-[E2 ubiquitin-conjugating enzyme]-L-cysteine + [acceptor protein]-L-lysine = [E2 ubiquitin-conjugating enzyme]-L-cysteine + N(6)-ubiquitinyl-[acceptor protein]-L-lysine.. Its pathway is protein modification; protein ubiquitination. This Arabidopsis thaliana (Mouse-ear cress) protein is RING-H2 finger protein ATL58 (ATL58).